The following is a 29-amino-acid chain: Cyclotide mobo-A (29 aa).

Positions 1–29 (GFPTCGETCTLGTCNTPGCTCSWPICTRN) form a cross-link, cyclopeptide (Gly-Asn). 3 disulfide bridges follow: Cys-5–Cys-19, Cys-9–Cys-21, and Cys-14–Cys-26.

This sequence belongs to the cyclotide family. Moebius subfamily. In terms of processing, this is a cyclic peptide.

Its function is as follows. Probably participates in a plant defense mechanism. In Melicytus obovatus (Hymenanthera obovata), this protein is Cyclotide mobo-A.